Here is a 163-residue protein sequence, read N- to C-terminus: Neurotrophin-3 (163 aa).

The N-terminal stretch at 1–3 (IQS) is a signal peptide. The propeptide occupies 4-119 (TSMDQGILTE…VLNRTSRRKR (116 aa)). Residue N112 is glycosylated (N-linked (GlcNAc...) asparagine). The disordered stretch occupies residues 113 to 133 (RTSRRKREGKSHRGEYSVCDS). Residues 123–133 (SHRGEYSVCDS) are compositionally biased toward basic and acidic residues.

The protein belongs to the NGF-beta family.

The protein resides in the secreted. In terms of biological role, seems to promote the survival of visceral and proprioceptive sensory neurons. This Charina bottae (Northern rubber boa) protein is Neurotrophin-3 (NTF3).